A 218-amino-acid polypeptide reads, in one-letter code: Glutathione S-transferase Mu 7 (218 aa).

Residues 1-88 (MPMTLGYWDI…YLGRKHNLCG (88 aa)) enclose the GST N-terminal domain. Glutathione is bound by residues 7-8 (YW), 46-50 (WLNEK), 59-60 (NL), and 72-73 (QS). One can recognise a GST C-terminal domain in the interval 90 to 208 (TEEERIRVDI…KTSRFLPRPM (119 aa)). Position 116 (tyrosine 116) interacts with substrate.

It belongs to the GST superfamily. Mu family. Homodimer.

Its subcellular location is the cytoplasm. The enzyme catalyses RX + glutathione = an S-substituted glutathione + a halide anion + H(+). Conjugation of reduced glutathione to a wide number of exogenous and endogenous hydrophobic electrophiles. This Mus musculus (Mouse) protein is Glutathione S-transferase Mu 7 (Gstm7).